Consider the following 416-residue polypeptide: Histidine--tRNA ligase (416 aa).

It belongs to the class-II aminoacyl-tRNA synthetase family. Homodimer.

It localises to the cytoplasm. It catalyses the reaction tRNA(His) + L-histidine + ATP = L-histidyl-tRNA(His) + AMP + diphosphate + H(+). In Clostridium kluyveri (strain NBRC 12016), this protein is Histidine--tRNA ligase.